A 267-amino-acid polypeptide reads, in one-letter code: MSALQALSTSRLDGKVALVTGSGRGIGAAIATELANRGASVVVNYANSPDAAQTVVDAIKKNGGDAIALQADVSDVKQTIKLFDDAVAHYGQLDIAVSNSGVVSFGHLKDVTEEEFDRVFAINTRGQFFVAREAYKHLSVGGRIILMGSITGQAKGVPKHTVYSGTKGAIETFVRCMAIDCGDKRITVNCVAPGGIKTDMYHAVCKEYIPNGENLTNEQVDEYAATWSPLNRVGQPIDVARVCGFLASQDGEWINGKVLGIDGAACM.

NADP(+)-binding residues include isoleucine 26, aspartate 72, asparagine 99, and arginine 132. The active-site Proton donor is serine 149. NADP(+)-binding residues include tyrosine 163, lysine 167, isoleucine 196, and threonine 198. Catalysis depends on tyrosine 163, which acts as the Proton acceptor. The active-site Lowers pKa of active site Tyr is lysine 167.

The protein belongs to the short-chain dehydrogenases/reductases (SDR) family.

Reductase; part of the gene cluster that mediates the biosynthesis of elsinochromes, pigments consisting of at least four interconvertible tautomers (A, B, C and D) that have a core phenolic quinone to which various side chains are attached and which play an important role in fungal pathogenesis. The non-reducing polyketide synthase PKS1 was proposed to iteratively catalyze decarboxylation between acetyl-CoA and malonyl-CoA subunits for polyketide chain elongation. The released polyketide undergoes cyclization to form an aromatic ring, and proceeds via serial modification steps to produce the heptaketide back- bone of elsinochrome. As elsinochrome has a symmetrical structure, two identical heptaketides are fused to form a core 1,2-dihydrobenzo-perylene ring structure, which can then be successively modified to produce the various derivatives of elsinochrome. Some of these reactions may be cooperatively carried out, at least in part, by the products of RDT1, OXR1 and PKS1. PRF1, embedded within the elsinochrome cluster possibly functions to stabilize some of the biosynthetic enzymes required for elsinochrome production. As prefoldin is a hexamer containing 2 a and 4 b subunits, additional prefoldin subunits, whose coding genes may not immediately link to the elsinochrome biosynthetic gene cluster, are required to fulfill the chaperone function. In addition, no methyltransferase-coding gene exists within the biosynthetic gene cluster, even though elsinochrome has four methyl groups at positions C3, C7, C8 and C12. Apparently, the identified gene cluster does not contain the entire entourage of genes responsible for elsinochrome biosynthesis. Once elsinochrome is synthesized, it must be exported outside the fungal cells, which is probably accomplished by the ECT1 transporter, to avoid toxicity. The chain is Elsinochrome reductase 1 from Elsinoe fawcettii (Citrus scab fungus).